Consider the following 219-residue polypeptide: Interleukin-6 (219 aa).

A signal peptide spans 1-20; that stretch reads MNSSTRYLSLLSALVVLVKG. Cys103 and Cys111 are oxidised to a cystine.

Belongs to the IL-6 superfamily. As to quaternary structure, component of a hexamer of two molecules each of IL6, IL6R and IL6ST; first binds to IL6R to associate with the signaling subunit IL6ST. In terms of tissue distribution, expressed in spleen, gill and gastrointestinal tract, ovary and brain. Highest expression in ovary.

Its subcellular location is the secreted. Functionally, cytokine with a wide variety of biological functions in immunity, tissue regeneration, and metabolism. Binds to IL6R, then the complex associates to the signaling subunit IL6ST/gp130 to trigger the intracellular IL6-signaling pathway. The interaction with the membrane-bound IL6R and IL6ST stimulates 'classic signaling', whereas the binding of IL6 and soluble IL6R to IL6ST stimulates 'trans-signaling'. Alternatively, 'cluster signaling' occurs when membrane-bound IL6:IL6R complexes on transmitter cells activate IL6ST receptors on neighboring receiver cells. The polypeptide is Interleukin-6 (il6) (Oncorhynchus mykiss (Rainbow trout)).